An 89-amino-acid chain; its full sequence is Small ribosomal subunit protein uS17 (89 aa).

Belongs to the universal ribosomal protein uS17 family. Part of the 30S ribosomal subunit.

Functionally, one of the primary rRNA binding proteins, it binds specifically to the 5'-end of 16S ribosomal RNA. This is Small ribosomal subunit protein uS17 from Paracidovorax citrulli (strain AAC00-1) (Acidovorax citrulli).